A 539-amino-acid chain; its full sequence is Phenylacetyl-CoA ligase epaB (539 aa).

Residue 188–199 participates in AMP binding; the sequence is RLFSSGTTGLPK. The segment at 449–525 is AMP-binding; that stretch reads EVEGVLRNHP…DAIPRNASGK (77 aa).

This sequence belongs to the ATP-dependent AMP-binding enzyme family.

Its pathway is secondary metabolite biosynthesis. Functionally, phenylacetyl-CoA ligase; part of the gene cluster that mediates the biosynthesis of nigerpyrone and its derivatives carbonarone A and pestalamide A. The biosynthesis pathway begins with the polyketide assembly by epaA to form phenylacetyl triketide precursor from successive condensation of two malonyl-CoA, presumably with one phenylacetyl-CoA starter unit produced by the phenylacetyl-CoA ligase epaB. For the nigerpyrone biosynthesis, the reactive polyketide chain is released as an aldehyde through the R-domain. A nonenzymatic cyclization and dehydration may create nigerpyrone. For the biosynthesis of carbonarone A and pestalamide A, an extra methyl group is added through the C-methyltransferase domain. Several further steps involving the dehydrogenase orf1, the cytochrome P450 monooxygenase orf2 and the FAD-dependent monooxygenase orf3 are required to form a carbonarone A precursor which is converted to carbonarone A via cyclization. The O-acetyltransferase epaC could catalyze the transfer of 2-methylsuccinyl-CoA, a common intermediate in the ethylmalonyl-CoA pathway, to generate the final product pestalamide A. The chain is Phenylacetyl-CoA ligase epaB from Aspergillus niger (strain ATCC MYA-4892 / CBS 513.88 / FGSC A1513).